The chain runs to 271 residues: MVLLKEYRVILPVSVDEYQVGQLYSVAEASKNETGGGEGVEVLVNEPYEKDDGEKGQYTHKIYHLQSKVPTFVRMLAPEGALNIHEKAWNAYPYCRTVITNEYMKEDFLIKIETWHKPDLGTQENVHKLEPEAWKHVEAIYIDIADRSQVLSKDYKAEEDPAKFKSVKTGRGPLGPNWKQELVNQKDCPYMCAYKLVTVKFKWWGLQNKVENFIHKQEKRLFTNFHRQLFCWLDKWVDLTMDDIRRMEEETKRQLDEMRQKDPVKGMTADD.

6 residues coordinate a 1,2-diacyl-sn-glycero-3-phospho-(1D-myo-inositol): Thr59, Lys61, Glu86, Asn90, Thr97, and Lys195. Lys216 is subject to N6-acetyllysine. Positions 251–264 (TKRQLDEMRQKDPV) are enriched in basic and acidic residues. The tract at residues 251 to 271 (TKRQLDEMRQKDPVKGMTADD) is disordered.

The protein belongs to the PtdIns transfer protein family. PI transfer class I subfamily. Post-translationally, phosphorylated by PKC in a calcium and phosphatidylserine-dependent manner.

The protein localises to the cytoplasm. It is found in the nucleus. It catalyses the reaction a 1,2-diacyl-sn-glycero-3-phosphocholine(in) = a 1,2-diacyl-sn-glycero-3-phosphocholine(out). The enzyme catalyses a 1,2-diacyl-sn-glycero-3-phospho-(1D-myo-inositol)(in) = a 1,2-diacyl-sn-glycero-3-phospho-(1D-myo-inositol)(out). Its function is as follows. Catalyzes the transfer of phosphatidylinositol (PI) and phosphatidylcholine (PC) between membranes. Shows a preference for PI and PC containing shorter saturated or monosaturated acyl chains at the sn-1 and sn-2 positions. Preference order for PC is C16:1 &gt; C16:0 &gt; C18:1 &gt; C18:0 &gt; C20:4 and for PI is C16:1 &gt; C16:0 &gt; C18:1 &gt; C18:0 &gt; C20:4 &gt; C20:3. This is Phosphatidylinositol transfer protein alpha isoform (Pitpna) from Mus musculus (Mouse).